Here is a 123-residue protein sequence, read N- to C-terminus: Small ribosomal subunit protein uS12 (123 aa).

Asp-89 is subject to 3-methylthioaspartic acid.

It belongs to the universal ribosomal protein uS12 family. As to quaternary structure, part of the 30S ribosomal subunit. Contacts proteins S8 and S17. May interact with IF1 in the 30S initiation complex.

In terms of biological role, with S4 and S5 plays an important role in translational accuracy. Interacts with and stabilizes bases of the 16S rRNA that are involved in tRNA selection in the A site and with the mRNA backbone. Located at the interface of the 30S and 50S subunits, it traverses the body of the 30S subunit contacting proteins on the other side and probably holding the rRNA structure together. The combined cluster of proteins S8, S12 and S17 appears to hold together the shoulder and platform of the 30S subunit. The polypeptide is Small ribosomal subunit protein uS12 (Bartonella tribocorum (strain CIP 105476 / IBS 506)).